A 913-amino-acid chain; its full sequence is DNA mismatch repair protein MutS (913 aa).

Residues 18–50 are disordered; sequence NNKQKEKTKIPEDLSLEDLKKESQKRPRQRKNS. The segment covering 19 to 42 has biased composition (basic and acidic residues); sequence NKQKEKTKIPEDLSLEDLKKESQK. Residue 720-727 coordinates ATP; it reads GPNASGKS.

The protein belongs to the DNA mismatch repair MutS family.

In terms of biological role, this protein is involved in the repair of mismatches in DNA. It is possible that it carries out the mismatch recognition step. This protein has a weak ATPase activity. This is DNA mismatch repair protein MutS from Prochlorococcus marinus (strain MIT 9301).